A 217-amino-acid chain; its full sequence is Ribosomal RNA small subunit methyltransferase G (217 aa).

Residues Gly-79, Leu-84, 130–131 (IE), and Arg-148 contribute to the S-adenosyl-L-methionine site.

This sequence belongs to the methyltransferase superfamily. RNA methyltransferase RsmG family.

The protein resides in the cytoplasm. It catalyses the reaction guanosine(527) in 16S rRNA + S-adenosyl-L-methionine = N(7)-methylguanosine(527) in 16S rRNA + S-adenosyl-L-homocysteine. Specifically methylates the N7 position of guanine in position 527 of 16S rRNA. This chain is Ribosomal RNA small subunit methyltransferase G, found in Desulfotalea psychrophila (strain LSv54 / DSM 12343).